The primary structure comprises 308 residues: Tyrosine recombinase XerD (308 aa).

The Core-binding (CB) domain occupies 3 to 89; sequence NGFTRLTEQF…SIHEFHRFAL (87 aa). The 192-residue stretch at 110–301 folds into the Tyr recombinase domain; it reads TLPDVLTVDE…SPETLIETYL (192 aa). Catalysis depends on residues arginine 153, lysine 177, histidine 253, arginine 256, and histidine 279. The active-site O-(3'-phospho-DNA)-tyrosine intermediate is tyrosine 288.

The protein belongs to the 'phage' integrase family. XerD subfamily. As to quaternary structure, forms a cyclic heterotetrameric complex composed of two molecules of XerC and two molecules of XerD.

It localises to the cytoplasm. Its function is as follows. Site-specific tyrosine recombinase, which acts by catalyzing the cutting and rejoining of the recombining DNA molecules. The XerC-XerD complex is essential to convert dimers of the bacterial chromosome into monomers to permit their segregation at cell division. It also contributes to the segregational stability of plasmids. The polypeptide is Tyrosine recombinase XerD (Bifidobacterium longum (strain NCC 2705)).